The chain runs to 151 residues: ATP synthase subunit b' (151 aa).

The helical transmembrane segment at 18 to 38 threads the bilayer; sequence TLPLMALQVVLLTFILNALFF.

This sequence belongs to the ATPase B chain family. F-type ATPases have 2 components, F(1) - the catalytic core - and F(0) - the membrane proton channel. F(1) has five subunits: alpha(3), beta(3), gamma(1), delta(1), epsilon(1). F(0) has four main subunits: a(1), b(1), b'(1) and c(10-14). The alpha and beta chains form an alternating ring which encloses part of the gamma chain. F(1) is attached to F(0) by a central stalk formed by the gamma and epsilon chains, while a peripheral stalk is formed by the delta, b and b' chains.

The protein resides in the cellular thylakoid membrane. Functionally, f(1)F(0) ATP synthase produces ATP from ADP in the presence of a proton or sodium gradient. F-type ATPases consist of two structural domains, F(1) containing the extramembraneous catalytic core and F(0) containing the membrane proton channel, linked together by a central stalk and a peripheral stalk. During catalysis, ATP synthesis in the catalytic domain of F(1) is coupled via a rotary mechanism of the central stalk subunits to proton translocation. Component of the F(0) channel, it forms part of the peripheral stalk, linking F(1) to F(0). The b'-subunit is a diverged and duplicated form of b found in plants and photosynthetic bacteria. This chain is ATP synthase subunit b', found in Prochlorococcus marinus (strain MIT 9313).